Here is a 442-residue protein sequence, read N- to C-terminus: MSEIGSYHDTIFALSSGRLPSGVAVIRISGPKTRFVYETICQAIPEPRHAALLTFRSRNGDAIDRGLTLFFPAPHTFTGEDCAEFHLHGGKAVVEKMLAVLGELPGCRIAEAGEFTRRAFANGKMDLTIAEGLADLIAAETEGQRRLAMQVASGNQRKLYSEWRQRLINARAFIEAELDFADESDVPGSVSMQVWQQLSALKHEIEYHIASGKRAAMLRDGLHVVIVGAPNAGKSSLLNFLAGRDVAIISEEAGTTRDLLEVKLDLGGIPVYVTDTAGLRETDSLVEKIGIERARARMAEADLVLSLEDMSGPVSVTVEKIEAETWLIGTKADLGGSASGLWKYHISTMTGSGLEQLLDALQAFAEAKIGQIEDAVPTRQRHINLLRATIEEIEKAIEGDDLPLELRAENMRLASQFLGRITGDVDVEEILDVIFSQFCIGK.

(6S)-5-formyl-5,6,7,8-tetrahydrofolate contacts are provided by Arg-27, Glu-84, and Lys-124. A TrmE-type G domain is found at 221–366; that stretch reads GLHVVIVGAP…LLDALQAFAE (146 aa). Residues 231 to 236, 250 to 256, and 275 to 278 each bind GTP; these read NAGKSS, SEEAGTT, and DTAG. Ser-235 and Thr-256 together coordinate Mg(2+). Residue Lys-442 coordinates (6S)-5-formyl-5,6,7,8-tetrahydrofolate.

The protein belongs to the TRAFAC class TrmE-Era-EngA-EngB-Septin-like GTPase superfamily. TrmE GTPase family. Homodimer. Heterotetramer of two MnmE and two MnmG subunits. K(+) serves as cofactor.

It is found in the cytoplasm. Exhibits a very high intrinsic GTPase hydrolysis rate. Involved in the addition of a carboxymethylaminomethyl (cmnm) group at the wobble position (U34) of certain tRNAs, forming tRNA-cmnm(5)s(2)U34. The sequence is that of tRNA modification GTPase MnmE from Brucella suis (strain ATCC 23445 / NCTC 10510).